The primary structure comprises 676 residues: DNA ligase (676 aa).

NAD(+)-binding positions include 42–46, 91–92, and Glu-121; these read DDVYD and SL. Lys-123 functions as the N6-AMP-lysine intermediate in the catalytic mechanism. NAD(+) contacts are provided by Arg-144, Glu-178, Lys-294, and Lys-318. Residues Cys-412, Cys-415, Cys-430, and Cys-435 each contribute to the Zn(2+) site. One can recognise a BRCT domain in the interval 596–676; it reads NSTSEFTGKR…QLQAAMDETK (81 aa).

Belongs to the NAD-dependent DNA ligase family. LigA subfamily. It depends on Mg(2+) as a cofactor. Mn(2+) serves as cofactor.

It carries out the reaction NAD(+) + (deoxyribonucleotide)n-3'-hydroxyl + 5'-phospho-(deoxyribonucleotide)m = (deoxyribonucleotide)n+m + AMP + beta-nicotinamide D-nucleotide.. In terms of biological role, DNA ligase that catalyzes the formation of phosphodiester linkages between 5'-phosphoryl and 3'-hydroxyl groups in double-stranded DNA using NAD as a coenzyme and as the energy source for the reaction. It is essential for DNA replication and repair of damaged DNA. The protein is DNA ligase of Levilactobacillus brevis (strain ATCC 367 / BCRC 12310 / CIP 105137 / JCM 1170 / LMG 11437 / NCIMB 947 / NCTC 947) (Lactobacillus brevis).